Reading from the N-terminus, the 368-residue chain is Cytochrome b (368 aa).

Transmembrane regions (helical) follow at residues 25 to 45, 69 to 90, 105 to 125, and 170 to 190; these read FGSMLLTCLILQTSTGFFLAM, WIMQNTHAIGASMFFICVYIHI, WLSGTALLITLMATAFFGYVL, and FFALHFILPFLIISLSSIHII. Heme b is bound by residues histidine 75 and histidine 89. Heme b-binding residues include histidine 174 and histidine 188. Histidine 193 contacts a ubiquinone. 4 consecutive transmembrane segments (helical) span residues 218–238, 280–300, 312–332, and 339–358; these read YKDMLVLTIMITLLFTIMSFT, LGGTLALLMSVMILTTTPFTH, LTQTLFWLLIATFITITWTAT, and FIFISQMASIIYFSFFIINP.

Belongs to the cytochrome b family. As to quaternary structure, the cytochrome bc1 complex contains 3 respiratory subunits (MT-CYB, CYC1 and UQCRFS1), 2 core proteins (UQCRC1 and UQCRC2) and probably 6 low-molecular weight proteins. Heme b serves as cofactor.

The protein resides in the mitochondrion inner membrane. Component of the ubiquinol-cytochrome c reductase complex (complex III or cytochrome b-c1 complex) that is part of the mitochondrial respiratory chain. The b-c1 complex mediates electron transfer from ubiquinol to cytochrome c. Contributes to the generation of a proton gradient across the mitochondrial membrane that is then used for ATP synthesis. The chain is Cytochrome b (MT-CYB) from Notechis ater (Black tiger snake).